We begin with the raw amino-acid sequence, 321 residues long: Torsin-2A (321 aa).

Residues 1–26 (MAAATRSCRPWGSLLGLIWLVSAAAA) form the signal peptide. 93 to 100 (GWTGTGKS) contacts ATP. Asparagine 149 carries an N-linked (GlcNAc...) asparagine glycan.

This sequence belongs to the ClpA/ClpB family. Torsin subfamily. In terms of assembly, homohexamer. Interacts with TOR1AIP1.

It is found in the endoplasmic reticulum lumen. The protein is Torsin-2A (TOR2A) of Bos taurus (Bovine).